The chain runs to 365 residues: Heterogeneous nuclear ribonucleoproteins A1 homolog (365 aa).

The segment at 4–94 (SEAPNEPEQL…EPKRAVSRED (91 aa)) is globular A domain. RRM domains are found at residues 14–97 (RKLF…DSSR) and 105–184 (KKIF…LSKQ). Residues 95-185 (SSRPGAHLTV…QVRKALSKQE (91 aa)) form a globular B domain region. Disordered stretches follow at residues 175–208 (SQVR…RGGF) and 328–365 (GPMK…GRRF). Composition is skewed to gly residues over residues 198–208 (GSGNYGSRGGF) and 330–365 (MKGG…GRRF). The nuclear targeting sequence stretch occupies residues 321 to 359 (SQSSSNFGPMKGGNYGGGRNSGPYGGGYGGGSASSSSGY).

It is found in the nucleus. The protein resides in the cytoplasm. In terms of biological role, this protein is a component of ribonucleosomes. The polypeptide is Heterogeneous nuclear ribonucleoproteins A1 homolog (hnrnpa1) (Xenopus laevis (African clawed frog)).